Consider the following 340-residue polypeptide: Mitochondrial import receptor subunit TOM40 homolog 2 (340 aa).

Residues 1–37 are disordered; it reads MGNVMASTADAESSRGRGHLSAGLRLPEAPQYSGGVP.

The protein belongs to the Tom40 family. As to quaternary structure, forms part of the preprotein translocase of the outer mitochondrial membrane (TOM complex). Interacts with mitochondrial targeting sequences. Only expressed in the male germline, detected in primary spermatocytes as well as post-meiotic stages. Not detected in stem cells and spermatogonia near the tip of the testis.

The protein resides in the mitochondrion outer membrane. Functionally, channel-forming protein essential for import of protein precursors into mitochondria. The polypeptide is Mitochondrial import receptor subunit TOM40 homolog 2 (Drosophila melanogaster (Fruit fly)).